Consider the following 192-residue polypeptide: Xanthine phosphoribosyltransferase (192 aa).

Xanthine contacts are provided by leucine 20 and asparagine 27. A 5-phospho-alpha-D-ribose 1-diphosphate-binding site is contributed by 128–132; that stretch reads ANGQA. Lysine 156 contacts xanthine.

The protein belongs to the purine/pyrimidine phosphoribosyltransferase family. Xpt subfamily. Homodimer.

The protein localises to the cytoplasm. The catalysed reaction is XMP + diphosphate = xanthine + 5-phospho-alpha-D-ribose 1-diphosphate. The protein operates within purine metabolism; XMP biosynthesis via salvage pathway; XMP from xanthine: step 1/1. Functionally, converts the preformed base xanthine, a product of nucleic acid breakdown, to xanthosine 5'-monophosphate (XMP), so it can be reused for RNA or DNA synthesis. In Lacticaseibacillus casei (strain BL23) (Lactobacillus casei), this protein is Xanthine phosphoribosyltransferase.